Reading from the N-terminus, the 111-residue chain is uncharacterized protein (111 aa).

2 helical membrane-spanning segments follow: residues 7–27 (ILNIILALAVPIGLLFISMMI) and 53–73 (AFAMFIPLLIIALTLLVTFLH).

It localises to the cell membrane. This is an uncharacterized protein from Bacillus anthracis.